The following is a 261-amino-acid chain: tRNA pseudouridine synthase A (261 aa).

Asp-51 functions as the Nucleophile in the catalytic mechanism. Position 109 (Tyr-109) interacts with substrate.

Belongs to the tRNA pseudouridine synthase TruA family. In terms of assembly, homodimer.

The catalysed reaction is uridine(38/39/40) in tRNA = pseudouridine(38/39/40) in tRNA. In terms of biological role, formation of pseudouridine at positions 38, 39 and 40 in the anticodon stem and loop of transfer RNAs. The polypeptide is tRNA pseudouridine synthase A (Shewanella sediminis (strain HAW-EB3)).